Here is a 72-residue protein sequence, read N- to C-terminus: Translation initiation factor IF-1 (72 aa).

The S1-like domain maps to 1-72 (MAKDDVIEVD…DKGRITFRYK (72 aa)).

It belongs to the IF-1 family. As to quaternary structure, component of the 30S ribosomal translation pre-initiation complex which assembles on the 30S ribosome in the order IF-2 and IF-3, IF-1 and N-formylmethionyl-tRNA(fMet); mRNA recruitment can occur at any time during PIC assembly.

The protein localises to the cytoplasm. Functionally, one of the essential components for the initiation of protein synthesis. Stabilizes the binding of IF-2 and IF-3 on the 30S subunit to which N-formylmethionyl-tRNA(fMet) subsequently binds. Helps modulate mRNA selection, yielding the 30S pre-initiation complex (PIC). Upon addition of the 50S ribosomal subunit IF-1, IF-2 and IF-3 are released leaving the mature 70S translation initiation complex. This chain is Translation initiation factor IF-1, found in Nitratiruptor sp. (strain SB155-2).